Here is a 514-residue protein sequence, read N- to C-terminus: Glycosyltransferase-like At3g57200 (514 aa).

The disordered stretch occupies residues 1 to 23 (MAGLYSSSSSSKPTLSSSPSSSS). The first 39 residues, 1-39 (MAGLYSSSSSSKPTLSSSPSSSSSSRLFLLVTLLPLSLA), serve as a signal peptide directing secretion. N-linked (GlcNAc...) asparagine glycans are attached at residues Asn-156, Asn-187, Asn-251, and Asn-460. The segment at 457-514 (PSKNSSTADSTSGITRESSQETGKRRVLEFHLDVDGESQASAVPPQSPPGLEATQMEL) is disordered. A compositionally biased stretch (polar residues) spans 458-473 (SKNSSTADSTSGITRE). Positions 474 to 490 (SSQETGKRRVLEFHLDV) are enriched in basic and acidic residues.

This sequence belongs to the glycosyltransferase 25 family.

It localises to the secreted. Its subcellular location is the cell wall. It is found in the cytoplasm. The protein resides in the cell membrane. Its function is as follows. Involved in the coordination between cell elongation and cellulose synthesis by promoting the expression of genes involved in cell elongation and cellulose synthesis. Acts as a regulator of plasmodesmatal permeability. Maybe a glycosyltransferase. In Arabidopsis thaliana (Mouse-ear cress), this protein is Glycosyltransferase-like At3g57200.